A 366-amino-acid polypeptide reads, in one-letter code: Protein disulfide isomerase-like 2-1 (366 aa).

The first 29 residues, 1–29 (MATPQISRKALASLLLLVAAAAAVSTASA), serve as a signal peptide directing secretion. Thioredoxin domains are found at residues 30-138 (DDVL…SEAA) and 139-257 (TNVK…EKCG). Catalysis depends on nucleophile residues C59, C62, C178, and C181. 2 disulfides stabilise this stretch: C59-C62 and C178-C181.

This sequence belongs to the protein disulfide isomerase family.

Its subcellular location is the secreted. The catalysed reaction is Catalyzes the rearrangement of -S-S- bonds in proteins.. In terms of biological role, acts as a protein-folding catalyst that interacts with nascent polypeptides to catalyze the formation, isomerization, and reduction or oxidation of disulfide bonds. May play a role in storage protein biogenesis. The chain is Protein disulfide isomerase-like 2-1 (PDIL2-1) from Oryza sativa subsp. japonica (Rice).